A 458-amino-acid polypeptide reads, in one-letter code: Bone morphogenetic protein 3 (458 aa).

The N-terminal stretch at 1-23 (MAECRPWLVLWVGCCGCLCLALG) is a signal peptide. A propeptide spanning residues 24–348 (ELLNDGLLAV…EQTLKKARRK (325 aa)) is cleaved from the precursor. An N-linked (GlcNAc...) asparagine glycan is attached at Asn-107. 2 disordered regions span residues 244 to 275 (DSVV…KKRS) and 303 to 335 (ERKP…SQTL). Positions 320–329 (NKKKLRKGSR) are enriched in basic residues. 3 disulfide bridges follow: Cys-356-Cys-423, Cys-385-Cys-455, and Cys-389-Cys-457. A glycan (N-linked (GlcNAc...) asparagine) is linked at Asn-449.

The protein belongs to the TGF-beta family. As to quaternary structure, homodimer. Can form heterodimers with ADMP, BMP-2-I and/or BMP-2-II, and DERRIERE.

It is found in the secreted. Functionally, dorsalizing factor. Antagonizes mesoderm formation by ventralizing BMPs. The protein is Bone morphogenetic protein 3 (bmp3) of Xenopus laevis (African clawed frog).